The following is a 316-amino-acid chain: Transaldolase (316 aa).

Lysine 126 acts as the Schiff-base intermediate with substrate in catalysis.

The protein belongs to the transaldolase family. Type 1 subfamily. As to quaternary structure, homodimer.

It is found in the cytoplasm. The enzyme catalyses D-sedoheptulose 7-phosphate + D-glyceraldehyde 3-phosphate = D-erythrose 4-phosphate + beta-D-fructose 6-phosphate. The protein operates within carbohydrate degradation; pentose phosphate pathway; D-glyceraldehyde 3-phosphate and beta-D-fructose 6-phosphate from D-ribose 5-phosphate and D-xylulose 5-phosphate (non-oxidative stage): step 2/3. Functionally, transaldolase is important for the balance of metabolites in the pentose-phosphate pathway. This chain is Transaldolase, found in Methylibium petroleiphilum (strain ATCC BAA-1232 / LMG 22953 / PM1).